The sequence spans 95 residues: FXYD domain-containing ion transport regulator 6 (95 aa).

The signal sequence occupies residues 1–18; sequence MELVLVFLCSLLAPTVLA. The Extracellular segment spans residues 19 to 35; the sequence is SAAEKEKEMDPFHYDYQ. A helical transmembrane segment spans residues 36 to 58; sequence TLRIGGLVFAVVLFSVGILLILS. Residues 59–95 are Cytoplasmic-facing; it reads RRCKCSFNQKPRAPGDEEAQVENLITANATEPQKAEN.

It belongs to the FXYD family. As to quaternary structure, regulatory subunit of the sodium/potassium-transporting ATPase which is composed of a catalytic alpha subunit, a non-catalytic beta subunit and an additional regulatory subunit. The regulatory subunit, a member of the FXYD protein family, modulates the enzymatic activity in a tissue- and isoform-specific way by changing affinities of the Na+/K+-ATPase toward Na(+), K(+) or ATP.

It is found in the cell membrane. Functionally, associates with and regulates the activity of the sodium/potassium-transporting ATPase (NKA) which catalyzes the hydrolysis of ATP coupled with the exchange of Na(+) and K(+) ions across the plasma membrane. Reduces the apparent affinity for intracellular Na(+) with no change in the apparent affinity for extracellular K(+). In addition to modulating NKA kinetics, may also function as a regulator of NKA localization to the plasma membrane. This Pongo abelii (Sumatran orangutan) protein is FXYD domain-containing ion transport regulator 6 (FXYD6).